The primary structure comprises 156 residues: Small ribosomal subunit protein uS7c (156 aa).

Belongs to the universal ribosomal protein uS7 family. In terms of assembly, part of the 30S ribosomal subunit.

Its subcellular location is the plastid. The protein localises to the chloroplast. Its function is as follows. One of the primary rRNA binding proteins, it binds directly to 16S rRNA where it nucleates assembly of the head domain of the 30S subunit. The sequence is that of Small ribosomal subunit protein uS7c (rps7) from Stangeria eriopus (Natal grass cycad).